The chain runs to 23 residues: M-myrmeciitoxin-Mp2b (23 aa).

Glutamine amide is present on glutamine 23.

It belongs to the formicidae venom precursor-01 superfamily. Ant pilosulin family. As to quaternary structure, heterodimer with M-MIITX-Mp2a (pilosulin-3a) (AC Q26464); disulfide-linked. Only heterodimers (and not monomers) have been identified in the venom. As to expression, expressed by the venom gland.

It is found in the secreted. Heterodimer protein that may serve both defensive (pain-inducing) and predatory (insecticidal) roles. Has membrane-disrupting activity and shows induction of non-specific calcium influx into cells,. Shows broad-spectrum activity against a diverse range of bacteria, and cell lines, as well as hemolytic activity (EC(50)=2.18 uM). In vivo, shows moderate insecticidal activity against D.melanogaster and potent anthelmintic activity against the veterinary nematode H.contortus. In addition, intraplantar injection into mice induces nocifensive behavior and mechanical allodynia. The sequence is that of M-myrmeciitoxin-Mp2b from Myrmecia pilosula (Jack jumper ant).